A 605-amino-acid polypeptide reads, in one-letter code: Replication protein E1 (605 aa).

Positions 76–78 (KRK) match the Nuclear localization signal motif. A phosphoserine; by host mark is found at Ser81 and Ser89. The short motif at 88 to 97 (LSPRLESISL) is the Nuclear export signal element. Residues 145–308 (GSGDVDIHYT…TILGHKSAEA (164 aa)) form a DNA-binding region region. An SF3 helicase domain is found at 407–557 (INFISFLAAL…FPMKADNTPQ (151 aa)). Position 433-440 (433-440 (GPPNTGKS)) interacts with ATP. Residue Lys514 forms a Glycyl lysine isopeptide (Lys-Gly) (interchain with G-Cter in SUMO) linkage.

This sequence belongs to the papillomaviridae E1 protein family. In terms of assembly, can form hexamers. Interacts with E2 protein; this interaction increases E1 DNA binding specificity. Interacts with host DNA polymerase subunit POLA2. Interacts with host single stranded DNA-binding protein RPA1. Interacts with host TOP1; this interaction stimulates the enzymatic activity of TOP1. Phosphorylated. Post-translationally, sumoylated.

It is found in the host nucleus. The enzyme catalyses Couples ATP hydrolysis with the unwinding of duplex DNA by translocating in the 3'-5' direction.. The catalysed reaction is ATP + H2O = ADP + phosphate + H(+). In terms of biological role, ATP-dependent DNA 3'-5' helicase required for initiation of viral DNA replication. It forms a complex with the viral E2 protein. The E1-E2 complex binds to the replication origin which contains binding sites for both proteins. During the initial step, a dimer of E1 interacts with a dimer of protein E2 leading to a complex that binds the viral origin of replication with high specificity. Then, a second dimer of E1 displaces the E2 dimer in an ATP-dependent manner to form the E1 tetramer. Following this, two E1 monomers are added to each half of the site, which results in the formation of two E1 trimers on the viral ori. Subsequently, two hexamers will be created. The double hexamer acts as a bi-directional helicase machinery and unwinds the viral DNA and then recruits the host DNA polymerase to start replication. This chain is Replication protein E1, found in Human papillomavirus 47.